Consider the following 542-residue polypeptide: Membrane protein insertase YidC (542 aa).

5 helical membrane passes run 7-27 (LLVM…QQDF), 338-358 (FALL…IIGV), 417-437 (MGGC…YWTF), 455-475 (LSAQ…MFLL), and 494-514 (FMPV…VLYW).

It belongs to the OXA1/ALB3/YidC family. Type 1 subfamily. In terms of assembly, interacts with the Sec translocase complex via SecD. Specifically interacts with transmembrane segments of nascent integral membrane proteins during membrane integration.

It is found in the cell inner membrane. In terms of biological role, required for the insertion and/or proper folding and/or complex formation of integral membrane proteins into the membrane. Involved in integration of membrane proteins that insert both dependently and independently of the Sec translocase complex, as well as at least some lipoproteins. Aids folding of multispanning membrane proteins. In Actinobacillus pleuropneumoniae serotype 7 (strain AP76), this protein is Membrane protein insertase YidC.